Here is a 620-residue protein sequence, read N- to C-terminus: tRNA uridine 5-carboxymethylaminomethyl modification enzyme MnmG (620 aa).

Residues 13 to 18, Val-125, and Ser-182 contribute to the FAD site; that span reads GGGHAG. Residue 280-294 participates in NAD(+) binding; the sequence is GPRYCPSVEDKIVKF. Asn-377 serves as a coordination point for FAD.

Belongs to the MnmG family. In terms of assembly, homodimer. Heterotetramer of two MnmE and two MnmG subunits. FAD serves as cofactor.

The protein localises to the cytoplasm. Functionally, NAD-binding protein involved in the addition of a carboxymethylaminomethyl (cmnm) group at the wobble position (U34) of certain tRNAs, forming tRNA-cmnm(5)s(2)U34. The chain is tRNA uridine 5-carboxymethylaminomethyl modification enzyme MnmG from Sulfurihydrogenibium sp. (strain YO3AOP1).